The sequence spans 640 residues: Threonine--tRNA ligase (640 aa).

A TGS domain is found at 1 to 61 (MPVITLPDGS…SNDATLQIIT (61 aa)). Residues 242–533 (DHRKIGKQLD…LIEHYAGVFP (292 aa)) form a catalytic region. Zn(2+) is bound by residues cysteine 333, histidine 384, and histidine 510.

It belongs to the class-II aminoacyl-tRNA synthetase family. In terms of assembly, homodimer. It depends on Zn(2+) as a cofactor.

It is found in the cytoplasm. It carries out the reaction tRNA(Thr) + L-threonine + ATP = L-threonyl-tRNA(Thr) + AMP + diphosphate + H(+). Catalyzes the attachment of threonine to tRNA(Thr) in a two-step reaction: L-threonine is first activated by ATP to form Thr-AMP and then transferred to the acceptor end of tRNA(Thr). Also edits incorrectly charged L-seryl-tRNA(Thr). This Pseudomonas putida (strain GB-1) protein is Threonine--tRNA ligase.